The primary structure comprises 628 residues: tRNA (guanine(37)-N(1))-methyltransferase (628 aa).

S-adenosyl-L-methionine is bound by residues His265, 303–304 (DL), 342–343 (DG), and Asn445.

It belongs to the class I-like SAM-binding methyltransferase superfamily. TRM5/TYW2 family. Monomer.

Its subcellular location is the mitochondrion matrix. The protein localises to the nucleus. It localises to the cytoplasm. It catalyses the reaction guanosine(37) in tRNA + S-adenosyl-L-methionine = N(1)-methylguanosine(37) in tRNA + S-adenosyl-L-homocysteine + H(+). Its function is as follows. Specifically methylates the N1 position of guanosine-37 in various cytoplasmic and mitochondrial tRNAs. Methylation is not dependent on the nature of the nucleoside 5' of the target nucleoside. This is the first step in the biosynthesis of wybutosine (yW), a modified base adjacent to the anticodon of tRNAs and required for accurate decoding. The polypeptide is tRNA (guanine(37)-N(1))-methyltransferase (Mycosarcoma maydis (Corn smut fungus)).